Here is a 568-residue protein sequence, read N- to C-terminus: Urease subunit alpha (568 aa).

The Urease domain maps to 130-568 (GGIDTHIHFI…LPMAQRYFLF (439 aa)). Ni(2+)-binding residues include His-135, His-137, and Lys-218. N6-carboxylysine is present on Lys-218. Substrate is bound at residue His-220. 2 residues coordinate Ni(2+): His-247 and His-273. Catalysis depends on His-321, which acts as the Proton donor. Asp-361 is a Ni(2+) binding site.

This sequence belongs to the metallo-dependent hydrolases superfamily. Urease alpha subunit family. As to quaternary structure, heterotrimer of UreA (gamma), UreB (beta) and UreC (alpha) subunits. Three heterotrimers associate to form the active enzyme. Requires Ni cation as cofactor. Carboxylation allows a single lysine to coordinate two nickel ions.

Its subcellular location is the cytoplasm. The catalysed reaction is urea + 2 H2O + H(+) = hydrogencarbonate + 2 NH4(+). The protein operates within nitrogen metabolism; urea degradation; CO(2) and NH(3) from urea (urease route): step 1/1. In Burkholderia ambifaria (strain ATCC BAA-244 / DSM 16087 / CCUG 44356 / LMG 19182 / AMMD) (Burkholderia cepacia (strain AMMD)), this protein is Urease subunit alpha.